The following is a 548-amino-acid chain: Protein GPR108 (548 aa).

Residues 1–32 (MAVSERRGLGRGSPAEWGPWLLLLLLLGGSSG) form the signal peptide. Residues asparagine 57, asparagine 63, and asparagine 109 are each glycosylated (N-linked (GlcNAc...) asparagine). The tract at residues 165–190 (DHAGTTAAPDKAKSKPTGLQGDRQGV) is disordered. N-linked (GlcNAc...) asparagine glycosylation is found at asparagine 205 and asparagine 209. Helical transmembrane passes span 268-288 (LYMVMSACFLGAGIFWVSILC), 297-317 (IHWLMAALTFTKSVSLLFHSI), 341-361 (LLKGALLFITIALIGSGWAFV), 372-392 (IFGIVIPLQVLANVAYIVMES), 406-426 (ILFLVDLICCGTILFPVVWSI), 454-474 (VMVICYIYFTRIIAILLRAVV), and 478-498 (WQWLYQLLVEGSTLAFFVLTG). Residue asparagine 539 is glycosylated (N-linked (GlcNAc...) asparagine).

The protein belongs to the LU7TM family.

The protein localises to the golgi apparatus. Its subcellular location is the cis-Golgi network membrane. It is found in the trans-Golgi network membrane. The protein resides in the golgi apparatus membrane. Functionally, may play a role in intracellular immune modulation by activating NF-kappaB response and attenuating Toll-like-receptor response. The polypeptide is Protein GPR108 (GPR108) (Bos taurus (Bovine)).